The following is a 443-amino-acid chain: 3-phosphoshikimate 1-carboxyvinyltransferase (443 aa).

The 3-phosphoshikimate site is built by Lys24, Ser25, and Arg29. Residue Lys24 participates in phosphoenolpyruvate binding. Residues Gly96 and Arg124 each contribute to the phosphoenolpyruvate site. 3-phosphoshikimate-binding residues include Ser168, Gln170, Asp316, and Lys343. Gln170 contacts phosphoenolpyruvate. Residue Asp316 is the Proton acceptor of the active site. Phosphoenolpyruvate-binding residues include Arg347 and Arg391.

The protein belongs to the EPSP synthase family. As to quaternary structure, monomer.

The protein localises to the cytoplasm. The enzyme catalyses 3-phosphoshikimate + phosphoenolpyruvate = 5-O-(1-carboxyvinyl)-3-phosphoshikimate + phosphate. It functions in the pathway metabolic intermediate biosynthesis; chorismate biosynthesis; chorismate from D-erythrose 4-phosphate and phosphoenolpyruvate: step 6/7. Its function is as follows. Catalyzes the transfer of the enolpyruvyl moiety of phosphoenolpyruvate (PEP) to the 5-hydroxyl of shikimate-3-phosphate (S3P) to produce enolpyruvyl shikimate-3-phosphate and inorganic phosphate. This chain is 3-phosphoshikimate 1-carboxyvinyltransferase, found in Dichelobacter nodosus (Bacteroides nodosus).